A 514-amino-acid polypeptide reads, in one-letter code: tRNA-2-methylthio-N(6)-dimethylallyladenosine synthase (514 aa).

The tract at residues 1–21 is disordered; the sequence is MNEEQRKASSVDVLAERDKKA. Residues 68–186 form the MTTase N-terminal domain; it reads RTFLIKTYGC…LPEILEEAYL (119 aa). Residues C77, C113, C147, C223, C227, and C230 each contribute to the [4Fe-4S] cluster site. The region spanning 209 to 440 is the Radical SAM core domain; sequence REGNIKAWVN…KKVGHYSQIA (232 aa). Residues 442 to 505 form the TRAM domain; that stretch reads SKYEGQTVTV…QYSLNGSFIK (64 aa).

The protein belongs to the methylthiotransferase family. MiaB subfamily. Monomer. It depends on [4Fe-4S] cluster as a cofactor.

The protein localises to the cytoplasm. It carries out the reaction N(6)-dimethylallyladenosine(37) in tRNA + (sulfur carrier)-SH + AH2 + 2 S-adenosyl-L-methionine = 2-methylsulfanyl-N(6)-dimethylallyladenosine(37) in tRNA + (sulfur carrier)-H + 5'-deoxyadenosine + L-methionine + A + S-adenosyl-L-homocysteine + 2 H(+). Catalyzes the methylthiolation of N6-(dimethylallyl)adenosine (i(6)A), leading to the formation of 2-methylthio-N6-(dimethylallyl)adenosine (ms(2)i(6)A) at position 37 in tRNAs that read codons beginning with uridine. The polypeptide is tRNA-2-methylthio-N(6)-dimethylallyladenosine synthase (Staphylococcus aureus (strain USA300 / TCH1516)).